The sequence spans 139 residues: Superoxide dismutase [Cu-Zn] (139 aa).

Cysteine 6 carries the S-palmitoyl cysteine lipid modification. Cu cation-binding residues include histidine 47 and histidine 49. Residues histidine 72, histidine 81, and aspartate 84 each contribute to the Zn(2+) site. Histidine 114 lines the Cu cation pocket. Residues 118–129 (DDLGKGGNDESL) are compositionally biased toward basic and acidic residues. The interval 118 to 139 (DDLGKGGNDESLKTGNAGGRMA) is disordered.

It belongs to the Cu-Zn superoxide dismutase family. Homodimer. Cu cation serves as cofactor. Zn(2+) is required as a cofactor.

It is found in the cytoplasm. Its subcellular location is the nucleus. The catalysed reaction is 2 superoxide + 2 H(+) = H2O2 + O2. Its function is as follows. Destroys radicals which are normally produced within the cells and which are toxic to biological systems. This chain is Superoxide dismutase [Cu-Zn] (sod1), found in Lampanyctus crocodilus (Jewel lanternfish).